The chain runs to 428 residues: Histidine--tRNA ligase (428 aa).

This sequence belongs to the class-II aminoacyl-tRNA synthetase family. As to quaternary structure, homodimer.

The protein resides in the cytoplasm. The catalysed reaction is tRNA(His) + L-histidine + ATP = L-histidyl-tRNA(His) + AMP + diphosphate + H(+). The sequence is that of Histidine--tRNA ligase from Chromohalobacter salexigens (strain ATCC BAA-138 / DSM 3043 / CIP 106854 / NCIMB 13768 / 1H11).